Reading from the N-terminus, the 164-residue chain is Large ribosomal subunit protein uL10 (164 aa).

Belongs to the universal ribosomal protein uL10 family. Part of the ribosomal stalk of the 50S ribosomal subunit. The N-terminus interacts with L11 and the large rRNA to form the base of the stalk. The C-terminus forms an elongated spine to which L12 dimers bind in a sequential fashion forming a multimeric L10(L12)X complex.

Its function is as follows. Forms part of the ribosomal stalk, playing a central role in the interaction of the ribosome with GTP-bound translation factors. This is Large ribosomal subunit protein uL10 from Chromobacterium violaceum (strain ATCC 12472 / DSM 30191 / JCM 1249 / CCUG 213 / NBRC 12614 / NCIMB 9131 / NCTC 9757 / MK).